The following is a 201-amino-acid chain: MVALLAEHTDTRQQAGLLVRPDNHDALSVAVTATPVVTTTGTPATPPALELDVQQGDGIGKRAGLPSRKQIETWVTSALYADAALTVRFVDEEEGRALNRSYRGKDYATNVLTFAYAESEDDPVTGDIVLCCPVVETEAREQRKPLEAHYAHLIVHGVLHAQGYEHEDDAEAEEMEAIETETLQALGFEDPYRDDHTPVAH.

The Zn(2+) site is built by His-156, His-160, and His-166.

The protein belongs to the endoribonuclease YbeY family. Requires Zn(2+) as cofactor.

It is found in the cytoplasm. Single strand-specific metallo-endoribonuclease involved in late-stage 70S ribosome quality control and in maturation of the 3' terminus of the 16S rRNA. The protein is Endoribonuclease YbeY of Cupriavidus pinatubonensis (strain JMP 134 / LMG 1197) (Cupriavidus necator (strain JMP 134)).